A 243-amino-acid polypeptide reads, in one-letter code: VQ motif-containing protein 33 (243 aa).

The segment covering 1 to 16 (MEVSTSSMSSKPEQMQ) has biased composition (polar residues). A disordered region spans residues 1–49 (MEVSTSSMSSKPEQMQNPPPMISSPRFQPQIISPHHHDQHQHLSNPYPT). A VQ motif is present at residues 59-68 (FKQVVQMLTG). Disordered stretches follow at residues 69-98 (SSTD…SIPP) and 138-162 (FTGG…SENI). Phosphoserine occurs at positions 83 and 95. Residues 84-98 (PVNNNNKGSSFSIPP) are compositionally biased toward polar residues. The residue at position 139 (T139) is a Phosphothreonine. Phosphoserine is present on residues S148, S152, S165, S167, and S178. A compositionally biased stretch (low complexity) spans 149 to 162 (PRFSPRNSSSSENI). The interval 180–243 (VTPLRSNDDP…FPVASPARNS (64 aa)) is disordered. Residue T181 is modified to Phosphothreonine. The span at 191–201 (NKSSPLSLGNS) shows a compositional bias: polar residues. A phosphoserine mark is found at S218 and S221. T222 is modified (phosphothreonine). S238 carries the phosphoserine modification.

Phosphorylated on serine and threonine residues by MPK6.

The protein localises to the nucleus. Functionally, may modulate WRKY transcription factor activities. The protein is VQ motif-containing protein 33 of Arabidopsis thaliana (Mouse-ear cress).